A 550-amino-acid chain; its full sequence is Spermatogenesis-associated protein 2 (550 aa).

Positions 83-156 (TVGTAFATLE…YNVRDHPGGA (74 aa)) constitute a PUB domain. The short motif at 320 to 337 (YHLSSLDEVDLYTERGLG) is the PIM motif element. Residues 457-480 (SKPVGSGPSPVGSLVSSGSSSSGG) form a disordered region.

This sequence belongs to the SPATA2 family.

The protein resides in the cytoplasm. The protein localises to the nucleus. Its function is as follows. Bridging factor that mediates the recruitment of cyld to the LUBAC complex, thereby regulating TNF-alpha-induced necroptosis. Required to activate the 'Met-1'- (linear) and 'Lys-63'-linked deubiquitinase activities of cyld. The chain is Spermatogenesis-associated protein 2 from Danio rerio (Zebrafish).